The following is a 652-amino-acid chain: Proline-rich receptor-like protein kinase PERK1 (652 aa).

The interval 1-137 (MSTAPSPGTT…PPSDSSDGLS (137 aa)) is disordered. The Extracellular portion of the chain corresponds to 1–139 (MSTAPSPGTT…SDSSDGLSTG (139 aa)). A compositionally biased stretch (pro residues) spans 8–19 (GTTPSPSPPSPP). Residues Asn21 and Asn50 are each glycosylated (N-linked (GlcNAc...) asparagine). Over residues 26-112 (TPPPAASSPP…PSPNQGPPNT (87 aa)) the composition is skewed to pro residues. Over residues 113–137 (PSGSTPRTPSNTKPSPPSDSSDGLS) the composition is skewed to low complexity. A helical transmembrane segment spans residues 140–160 (VVVGIAIGGVAILVILTLICL). The Cytoplasmic segment spans residues 161–652 (LCKKKRRRRH…TGQGYSGPSL (492 aa)). The tract at residues 169-251 (RHDDEAAYYV…GGSDYSDLPV (83 aa)) is disordered. A compositionally biased stretch (polar residues) spans 203 to 213 (NASRPSDNHVV). Positions 216 to 236 (LPPPKPPSPPRKPPPPPPPPA) are enriched in pro residues. Thr269 carries the post-translational modification Phosphothreonine. The Protein kinase domain maps to 280 to 559 (FSEANLLGQG…VRALEGNVSL (280 aa)). Residues 286-294 (LGQGGFGYV) and Lys308 each bind ATP. A Phosphotyrosine modification is found at Tyr353. The active-site Proton acceptor is the Asp404. Ser408 and Ser437 each carry phosphoserine. Thr438 and Thr443 each carry phosphothreonine. Tyr451 carries the phosphotyrosine modification. Residues 605–616 (YGTTGEYSNPTS) show a composition bias toward polar residues. Positions 605-652 (YGTTGEYSNPTSDYGLYPSGSSSEGQATREMEMGKIKKTGQGYSGPSL) are disordered.

This sequence belongs to the protein kinase superfamily. Ser/Thr protein kinase family. As to expression, mostly expressed in inflorescence bolt, flower buds and siliques, and, to a lower extent, in roots, seedlings and leaves.

Its subcellular location is the cell membrane. It catalyses the reaction L-seryl-[protein] + ATP = O-phospho-L-seryl-[protein] + ADP + H(+). The enzyme catalyses L-threonyl-[protein] + ATP = O-phospho-L-threonyl-[protein] + ADP + H(+). This is Proline-rich receptor-like protein kinase PERK1 (PERK1) from Arabidopsis thaliana (Mouse-ear cress).